A 174-amino-acid chain; its full sequence is Adenine phosphoribosyltransferase (174 aa).

This sequence belongs to the purine/pyrimidine phosphoribosyltransferase family. Homodimer.

It localises to the cytoplasm. It carries out the reaction AMP + diphosphate = 5-phospho-alpha-D-ribose 1-diphosphate + adenine. It participates in purine metabolism; AMP biosynthesis via salvage pathway; AMP from adenine: step 1/1. Catalyzes a salvage reaction resulting in the formation of AMP, that is energically less costly than de novo synthesis. This Phocaeicola vulgatus (strain ATCC 8482 / DSM 1447 / JCM 5826 / CCUG 4940 / NBRC 14291 / NCTC 11154) (Bacteroides vulgatus) protein is Adenine phosphoribosyltransferase.